We begin with the raw amino-acid sequence, 597 residues long: Elongation factor 4 (597 aa).

Residues 2-184 enclose the tr-type G domain; it reads KNIRNFSIIA…EIVAKIPAPT (183 aa). Residues 14 to 19 and 131 to 134 contribute to the GTP site; these read DHGKST and NKID.

Belongs to the TRAFAC class translation factor GTPase superfamily. Classic translation factor GTPase family. LepA subfamily.

Its subcellular location is the cell inner membrane. It catalyses the reaction GTP + H2O = GDP + phosphate + H(+). Its function is as follows. Required for accurate and efficient protein synthesis under certain stress conditions. May act as a fidelity factor of the translation reaction, by catalyzing a one-codon backward translocation of tRNAs on improperly translocated ribosomes. Back-translocation proceeds from a post-translocation (POST) complex to a pre-translocation (PRE) complex, thus giving elongation factor G a second chance to translocate the tRNAs correctly. Binds to ribosomes in a GTP-dependent manner. The protein is Elongation factor 4 of Neisseria gonorrhoeae (strain ATCC 700825 / FA 1090).